The chain runs to 2290 residues: Autophagy-related protein 2 (2290 aa).

In terms of domain architecture, Chorein N-terminal spans 10–99 (WCKVMLQRYM…MCIEDLQLTF (90 aa)). The required for epg-6 binding stretch occupies residues 829 to 1549 (DSMMKSVSAD…PNRDHSAFVV (721 aa)). 4 disordered regions span residues 1678–1727 (IGSK…LGDL), 1805–1851 (DDLF…DLTG), 1898–1919 (SETE…PARN), and 1967–2003 (EHGN…ERNK). The segment covering 1681–1692 (KKTTPKTSVSSS) has biased composition (low complexity). Over residues 1714–1723 (RPSPVQPPTP) the composition is skewed to pro residues. Residues 1810–1830 (QSYSSSSSETESESSAPQSSQ) are compositionally biased toward low complexity. A coiled-coil region spans residues 1972-2011 (LDSIDNEDDNEKQKIEEEMEEDEKEEEEERNKEIQEAVER). Over residues 1988-1999 (EEMEEDEKEEEE) the composition is skewed to acidic residues.

The protein belongs to the ATG2 family. Interacts with epg-6; the interaction is direct.

Its subcellular location is the preautophagosomal structure membrane. The protein resides in the lipid droplet. The protein localises to the endoplasmic reticulum membrane. It localises to the cytoplasm. The enzyme catalyses a 1,2-diacyl-sn-glycero-3-phospho-L-serine(in) = a 1,2-diacyl-sn-glycero-3-phospho-L-serine(out). The catalysed reaction is a 1,2-diacyl-sn-glycero-3-phosphoethanolamine(in) = a 1,2-diacyl-sn-glycero-3-phosphoethanolamine(out). Lipid transfer protein involved in autophagosome assembly and in the distribution of atg-9 and atg-13 during the autophagy-mediated degradation of protein aggregates. Tethers the edge of the isolation membrane (IM) to the endoplasmic reticulum (ER) and mediates direct lipid transfer from ER to IM for IM expansion. Binds to the ER exit site (ERES), which is the membrane source for autophagosome formation, and extracts phospholipids from the membrane source to the IM for membrane expansion. Involved in autophagy-mediated degradation of ribosomal RNA and ribosomal proteins in lysosomes, which is essential for maintaining nucleotide homeostasis. The chain is Autophagy-related protein 2 from Caenorhabditis elegans.